The primary structure comprises 168 residues: CDP-archaeol synthase (168 aa).

A run of 5 helical transmembrane segments spans residues Ile4–Leu24, Gly51–Pro71, Val81–Ile101, Pro112–Leu132, and Gly138–Ala158.

This sequence belongs to the CDP-archaeol synthase family. Requires Mg(2+) as cofactor.

Its subcellular location is the cell membrane. The enzyme catalyses 2,3-bis-O-(geranylgeranyl)-sn-glycerol 1-phosphate + CTP + H(+) = CDP-2,3-bis-O-(geranylgeranyl)-sn-glycerol + diphosphate. It participates in membrane lipid metabolism; glycerophospholipid metabolism. In terms of biological role, catalyzes the formation of CDP-2,3-bis-(O-geranylgeranyl)-sn-glycerol (CDP-archaeol) from 2,3-bis-(O-geranylgeranyl)-sn-glycerol 1-phosphate (DGGGP) and CTP. This reaction is the third ether-bond-formation step in the biosynthesis of archaeal membrane lipids. The protein is CDP-archaeol synthase of Pyrococcus abyssi (strain GE5 / Orsay).